The following is a 325-amino-acid chain: MSDSTIRTYSSDQRQTDNDETVSTPDEDVLTCPECGGQVIDDEEHGESVCVDCGLVVEENGIDRGPEWRAFNSTEKDEKSRVGAPTTNMMHDKGLSTNIGWQDKDAYGNSLSSNQRQKMQRLRKWNERFRTRNSKERNLKQALGEIERMASALGLPKEVRETASVIYRRALSEDLLPGRSIEGVATAALYASARQLSTPRSIDEVANVSRIDEMEFKRTYRYIVRELSLEVAPADPAQYVPRFASDLDLPDEVERRSRELISNAQADGVTSGKSPVGLAAAAIYASSLLTNHKVTQSEVSEVTDVSEVTIRNRYQELLEATEAAA.

Residues 1-13 show a composition bias toward polar residues; the sequence is MSDSTIRTYSSDQ. Residues 1–29 form a disordered region; it reads MSDSTIRTYSSDQRQTDNDETVSTPDEDV. Residues 28–58 form a TFIIB-type zinc finger; the sequence is DVLTCPECGGQVIDDEEHGESVCVDCGLVVE. Residues Cys32, Cys35, Cys50, and Cys53 each coordinate Zn(2+). The segment at 73 to 93 is disordered; the sequence is STEKDEKSRVGAPTTNMMHDK. Tandem repeats lie at residues 144-227 and 238-319.

This sequence belongs to the TFIIB family.

In terms of biological role, stabilizes TBP binding to an archaeal box-A promoter. Also responsible for recruiting RNA polymerase II to the pre-initiation complex (DNA-TBP-TFIIB). The polypeptide is Transcription initiation factor IIB 2 (Halobacterium salinarum (strain ATCC 700922 / JCM 11081 / NRC-1) (Halobacterium halobium)).